The sequence spans 170 residues: uncharacterized protein (170 aa).

Residues 15-81 are a coiled coil; it reads EAFDEKAEKE…EREKSKSAVS (67 aa). Basic and acidic residues predominate over residues 20 to 77; the sequence is KAEKEKVEKEKALKEKTEKEKAEKEKAEKEKVEKEKAEKEKAAKEKAAKEKAEREKSK. Residues 20 to 95 form a disordered region; the sequence is KAEKEKVEKE…NQNSNKGNVE (76 aa). Residues 78–92 show a composition bias toward polar residues; that stretch reads SAVSPATTNQNSNKG. Residues 98-118 form a helical membrane-spanning segment; it reads VAIGVLAGGAVTGVAVGGAYL.

It is found in the membrane. This is an uncharacterized protein from Dictyostelium discoideum (Social amoeba).